The chain runs to 218 residues: Protein-L-isoaspartate O-methyltransferase (218 aa).

S69 is a catalytic residue.

Belongs to the methyltransferase superfamily. L-isoaspartyl/D-aspartyl protein methyltransferase family.

The protein resides in the cytoplasm. It carries out the reaction [protein]-L-isoaspartate + S-adenosyl-L-methionine = [protein]-L-isoaspartate alpha-methyl ester + S-adenosyl-L-homocysteine. Functionally, catalyzes the methyl esterification of L-isoaspartyl residues in peptides and proteins that result from spontaneous decomposition of normal L-aspartyl and L-asparaginyl residues. It plays a role in the repair and/or degradation of damaged proteins. This is Protein-L-isoaspartate O-methyltransferase from Aromatoleum aromaticum (strain DSM 19018 / LMG 30748 / EbN1) (Azoarcus sp. (strain EbN1)).